We begin with the raw amino-acid sequence, 335 residues long: Biotin synthase (335 aa).

Residues 46 to 274 (YDIQLASLFS…ESKIRLSAGR (229 aa)) form the Radical SAM core domain. Residues cysteine 61, cysteine 65, and cysteine 68 each contribute to the [4Fe-4S] cluster site. Residues cysteine 105, cysteine 137, cysteine 197, and arginine 269 each coordinate [2Fe-2S] cluster.

Belongs to the radical SAM superfamily. Biotin synthase family. In terms of assembly, homodimer. [4Fe-4S] cluster serves as cofactor. The cofactor is [2Fe-2S] cluster.

It catalyses the reaction (4R,5S)-dethiobiotin + (sulfur carrier)-SH + 2 reduced [2Fe-2S]-[ferredoxin] + 2 S-adenosyl-L-methionine = (sulfur carrier)-H + biotin + 2 5'-deoxyadenosine + 2 L-methionine + 2 oxidized [2Fe-2S]-[ferredoxin]. It participates in cofactor biosynthesis; biotin biosynthesis; biotin from 7,8-diaminononanoate: step 2/2. Its function is as follows. Catalyzes the conversion of dethiobiotin (DTB) to biotin by the insertion of a sulfur atom into dethiobiotin via a radical-based mechanism. In Prochlorococcus marinus (strain MIT 9301), this protein is Biotin synthase.